We begin with the raw amino-acid sequence, 476 residues long: Cysteine--tRNA ligase (476 aa).

C31 is a Zn(2+) binding site. The short motif at 33 to 43 (PTVYNYAHIGN) is the 'HIGH' region element. Zn(2+) contacts are provided by C211, H236, and E240. Positions 269-273 (KMSKS) match the 'KMSKS' region motif. K272 contacts ATP.

The protein belongs to the class-I aminoacyl-tRNA synthetase family. Monomer. Zn(2+) serves as cofactor.

The protein localises to the cytoplasm. The enzyme catalyses tRNA(Cys) + L-cysteine + ATP = L-cysteinyl-tRNA(Cys) + AMP + diphosphate. The protein is Cysteine--tRNA ligase of Xanthomonas euvesicatoria pv. vesicatoria (strain 85-10) (Xanthomonas campestris pv. vesicatoria).